Reading from the N-terminus, the 648-residue chain is Cell surface glycoprotein MUC18 (648 aa).

The signal sequence occupies residues 1 to 23 (MGLPKLVCVFLFAACCCCRRAAG). 2 Ig-like V-type domains span residues 24 to 131 (VPGE…HYVE) and 141 to 244 (PTIQ…KEVT). Residues 24–563 (VPGEEKQPVP…LPQPESKGVV (540 aa)) lie on the Extracellular side of the membrane. 5 disulfide bridges follow: Cys50/Cys118, Cys163/Cys225, Cys274/Cys322, Cys367/Cys409, and Cys454/Cys501. Residue Asn58 is glycosylated (N-linked (GlcNAc...) asparagine). Ig-like C2-type domains lie at 246–332 (PVFY…TTIT), 337–426 (PLEL…QLVS), and 432–512 (SPWM…SNTT). Residues 281 to 304 (QPHFTINKKDPSTGEMEEESTDEN) form a disordered region. N-linked (GlcNAc...) asparagine glycosylation occurs at Asn510. Polar residues predominate over residues 532 to 549 (TGLSTLTVSPHTRANSTS). Residues 532 to 554 (TGLSTLTVSPHTRANSTSTEKKL) are disordered. The helical transmembrane segment at 564-584 (IVAVIVCTLVLAVLGAALYFF) threads the bilayer. Topologically, residues 585–648 (YKKGKLPCGR…QGEKYIDLRH (64 aa)) are cytoplasmic. Residues Ser608 and Ser616 each carry the phosphoserine modification. The interval 625–648 (LLQGSNGDKRAPGDQGEKYIDLRH) is disordered. Positions 631–648 (GDKRAPGDQGEKYIDLRH) are enriched in basic and acidic residues.

Detected in melanoma cell lines.

It is found in the membrane. In terms of biological role, plays a role in cell adhesion, and in cohesion of the endothelial monolayer at intercellular junctions in vascular tissue. Its expression may allow melanoma cells to interact with cellular elements of the vascular system, thereby enhancing hematogeneous tumor spread. Could be an adhesion molecule active in neural crest cells during embryonic development. Acts as a surface receptor that triggers tyrosine phosphorylation of FYN and PTK2/FAK1, and a transient increase in the intracellular calcium concentration. This chain is Cell surface glycoprotein MUC18 (Mcam), found in Mus musculus (Mouse).